The primary structure comprises 258 residues: Acyl-[acyl-carrier-protein]--UDP-N-acetylglucosamine O-acyltransferase (258 aa).

It belongs to the transferase hexapeptide repeat family. LpxA subfamily. As to quaternary structure, homotrimer.

Its subcellular location is the cytoplasm. The catalysed reaction is a (3R)-hydroxyacyl-[ACP] + UDP-N-acetyl-alpha-D-glucosamine = a UDP-3-O-[(3R)-3-hydroxyacyl]-N-acetyl-alpha-D-glucosamine + holo-[ACP]. It participates in glycolipid biosynthesis; lipid IV(A) biosynthesis; lipid IV(A) from (3R)-3-hydroxytetradecanoyl-[acyl-carrier-protein] and UDP-N-acetyl-alpha-D-glucosamine: step 1/6. In terms of biological role, involved in the biosynthesis of lipid A, a phosphorylated glycolipid that anchors the lipopolysaccharide to the outer membrane of the cell. This is Acyl-[acyl-carrier-protein]--UDP-N-acetylglucosamine O-acyltransferase from Neisseria meningitidis serogroup C / serotype 2a (strain ATCC 700532 / DSM 15464 / FAM18).